The sequence spans 104 residues: Large ribosomal subunit protein bL21 (104 aa).

This sequence belongs to the bacterial ribosomal protein bL21 family. In terms of assembly, part of the 50S ribosomal subunit. Contacts protein L20.

In terms of biological role, this protein binds to 23S rRNA in the presence of protein L20. This chain is Large ribosomal subunit protein bL21, found in Opitutus terrae (strain DSM 11246 / JCM 15787 / PB90-1).